We begin with the raw amino-acid sequence, 252 residues long: Aliphatic sulfonates import ATP-binding protein SsuB 1 (252 aa).

The region spanning 6 to 234 (LQLHIAGKRF…PRDRQAHEAA (229 aa)) is the ABC transporter domain. 38–45 (GASGCGKS) lines the ATP pocket.

The protein belongs to the ABC transporter superfamily. Aliphatic sulfonates importer (TC 3.A.1.17.2) family. In terms of assembly, the complex is composed of two ATP-binding proteins (SsuB), two transmembrane proteins (SsuC) and a solute-binding protein (SsuA).

It localises to the cell inner membrane. It catalyses the reaction ATP + H2O + aliphatic sulfonate-[sulfonate-binding protein]Side 1 = ADP + phosphate + aliphatic sulfonateSide 2 + [sulfonate-binding protein]Side 1.. Part of the ABC transporter complex SsuABC involved in aliphatic sulfonates import. Responsible for energy coupling to the transport system. This Xanthomonas axonopodis pv. citri (strain 306) protein is Aliphatic sulfonates import ATP-binding protein SsuB 1.